Consider the following 297-residue polypeptide: T-cell leukemia homeobox protein 1 (297 aa).

The tract at residues 153-174 (DRFTGHPYQNRTPPKKKKPRTS) is disordered. Positions 168-227 (KKKPRTSFTRLQICELEKRFHRQKYLASAERAALAKALKMTDAQVKTWFQNRRTKWRRQT) form a DNA-binding region, homeobox.

It is found in the nucleus. Seems to be involved in the development of cranial sensory innervation from peripheral ganglia. The chain is T-cell leukemia homeobox protein 1 (TLX1) from Gallus gallus (Chicken).